Reading from the N-terminus, the 209-residue chain is MLLIAGLGNPGPTYAKNRHNIGFMAVDEIARRWGFPAARSRFRSLAAEGAIDTPQGPVRTLILKPQTYYNESGRAVGEAMKFFKLQPSDVVVFYDEIDLAPGRFRMKTGGGAAGNNGIRSVASQIGPDFRRARLGTGHPGQKELVHGHVLSDFHKAEMKWVEPLLEACADAAPLLALGDDEKYQAEVMRLAPAEKADPRKLAQGKPRGE.

Tyrosine 14 provides a ligand contact to tRNA. Histidine 19 (proton acceptor) is an active-site residue. The tRNA site is built by tyrosine 68, asparagine 70, and asparagine 116.

The protein belongs to the PTH family. In terms of assembly, monomer.

Its subcellular location is the cytoplasm. The enzyme catalyses an N-acyl-L-alpha-aminoacyl-tRNA + H2O = an N-acyl-L-amino acid + a tRNA + H(+). Hydrolyzes ribosome-free peptidyl-tRNAs (with 1 or more amino acids incorporated), which drop off the ribosome during protein synthesis, or as a result of ribosome stalling. Its function is as follows. Catalyzes the release of premature peptidyl moieties from peptidyl-tRNA molecules trapped in stalled 50S ribosomal subunits, and thus maintains levels of free tRNAs and 50S ribosomes. This is Peptidyl-tRNA hydrolase from Phenylobacterium zucineum (strain HLK1).